A 363-amino-acid chain; its full sequence is Neutral protease 2 homolog NFIA_102630 (363 aa).

The N-terminal stretch at 1-19 is a signal peptide; that stretch reads MKVTVLASAILALINGALA. A propeptide spanning residues 20-172 is cleaved from the precursor; that stretch reads LPANAPTLDV…PQAIKLLDRR (153 aa). 2 disulfide bridges follow: Cys178/Cys250 and Cys257/Cys275. Zn(2+) is bound at residue His300. The active site involves Glu301. Zn(2+)-binding residues include His304 and Asp315.

This sequence belongs to the peptidase M35 family. It depends on Zn(2+) as a cofactor.

The protein localises to the secreted. It catalyses the reaction Preferential cleavage of bonds with hydrophobic residues in P1'. Also 3-Asn-|-Gln-4 and 8-Gly-|-Ser-9 bonds in insulin B chain.. Its function is as follows. Secreted metalloproteinase that allows assimilation of proteinaceous substrates. Shows high activities on basic nuclear substrates such as histone and protamine. This chain is Neutral protease 2 homolog NFIA_102630, found in Neosartorya fischeri (strain ATCC 1020 / DSM 3700 / CBS 544.65 / FGSC A1164 / JCM 1740 / NRRL 181 / WB 181) (Aspergillus fischerianus).